A 272-amino-acid chain; its full sequence is Formamidopyrimidine-DNA glycosylase (272 aa).

The active-site Schiff-base intermediate with DNA is the proline 2. Glutamate 3 acts as the Proton donor in catalysis. Catalysis depends on lysine 58, which acts as the Proton donor; for beta-elimination activity. Residues histidine 92, arginine 111, and arginine 153 each coordinate DNA. The FPG-type zinc-finger motif lies at 238 to 272; the sequence is AVYGRQGQSCPRCGGLVERCRLGQRSTFFCPACQR. Arginine 262 serves as the catalytic Proton donor; for delta-elimination activity.

It belongs to the FPG family. As to quaternary structure, monomer. Zn(2+) serves as cofactor.

It catalyses the reaction Hydrolysis of DNA containing ring-opened 7-methylguanine residues, releasing 2,6-diamino-4-hydroxy-5-(N-methyl)formamidopyrimidine.. The enzyme catalyses 2'-deoxyribonucleotide-(2'-deoxyribose 5'-phosphate)-2'-deoxyribonucleotide-DNA = a 3'-end 2'-deoxyribonucleotide-(2,3-dehydro-2,3-deoxyribose 5'-phosphate)-DNA + a 5'-end 5'-phospho-2'-deoxyribonucleoside-DNA + H(+). Functionally, involved in base excision repair of DNA damaged by oxidation or by mutagenic agents. Acts as a DNA glycosylase that recognizes and removes damaged bases. Has a preference for oxidized purines, such as 7,8-dihydro-8-oxoguanine (8-oxoG). Has AP (apurinic/apyrimidinic) lyase activity and introduces nicks in the DNA strand. Cleaves the DNA backbone by beta-delta elimination to generate a single-strand break at the site of the removed base with both 3'- and 5'-phosphates. The protein is Formamidopyrimidine-DNA glycosylase of Laribacter hongkongensis (strain HLHK9).